The following is a 269-amino-acid chain: Kafirin PGK1 (269 aa).

The signal sequence occupies residues 1-21; the sequence is MATKIFALLALHALLVSGTTA.

This sequence belongs to the zein family.

Major seed storage prolamin. In Sorghum bicolor (Sorghum), this protein is Kafirin PGK1.